A 169-amino-acid polypeptide reads, in one-letter code: Ribosome maturation factor RimP (169 aa).

The protein belongs to the RimP family.

It is found in the cytoplasm. Required for maturation of 30S ribosomal subunits. The chain is Ribosome maturation factor RimP from Pseudomonas putida (strain ATCC 700007 / DSM 6899 / JCM 31910 / BCRC 17059 / LMG 24140 / F1).